The primary structure comprises 100 residues: NAD(P)H-quinone oxidoreductase subunit 4L, chloroplastic (100 aa).

The next 3 helical transmembrane spans lie at 1-21 (MLEH…YGLI), 31-51 (MCLE…SDFF), and 60-80 (IFSI…PAIL).

This sequence belongs to the complex I subunit 4L family. As to quaternary structure, NDH is composed of at least 16 different subunits, 5 of which are encoded in the nucleus.

The protein localises to the plastid. It is found in the chloroplast thylakoid membrane. It catalyses the reaction a plastoquinone + NADH + (n+1) H(+)(in) = a plastoquinol + NAD(+) + n H(+)(out). The catalysed reaction is a plastoquinone + NADPH + (n+1) H(+)(in) = a plastoquinol + NADP(+) + n H(+)(out). In terms of biological role, NDH shuttles electrons from NAD(P)H:plastoquinone, via FMN and iron-sulfur (Fe-S) centers, to quinones in the photosynthetic chain and possibly in a chloroplast respiratory chain. The immediate electron acceptor for the enzyme in this species is believed to be plastoquinone. Couples the redox reaction to proton translocation, and thus conserves the redox energy in a proton gradient. In Cucumis sativus (Cucumber), this protein is NAD(P)H-quinone oxidoreductase subunit 4L, chloroplastic.